The chain runs to 745 residues: 5-methyltetrahydropteroyltriglutamate--homocysteine methyltransferase (745 aa).

5-methyltetrahydropteroyltri-L-glutamate is bound by residues 19 to 22 (RELK) and lysine 119. Residues 418–420 (IGS) and glutamate 471 contribute to the L-homocysteine site. L-methionine-binding positions include 418–420 (IGS) and glutamate 471. Residues 502–503 (RC) and tryptophan 548 each bind 5-methyltetrahydropteroyltri-L-glutamate. Aspartate 586 contacts L-homocysteine. Position 586 (aspartate 586) interacts with L-methionine. 5-methyltetrahydropteroyltri-L-glutamate is bound at residue glutamate 592. Zn(2+) contacts are provided by histidine 628, cysteine 630, and glutamate 652. The active-site Proton donor is histidine 681. Cysteine 713 contributes to the Zn(2+) binding site.

Belongs to the vitamin-B12 independent methionine synthase family. Zn(2+) serves as cofactor.

It catalyses the reaction 5-methyltetrahydropteroyltri-L-glutamate + L-homocysteine = tetrahydropteroyltri-L-glutamate + L-methionine. It participates in amino-acid biosynthesis; L-methionine biosynthesis via de novo pathway; L-methionine from L-homocysteine (MetE route): step 1/1. Catalyzes the transfer of a methyl group from 5-methyltetrahydrofolate to homocysteine resulting in methionine formation. This Corynebacterium glutamicum (strain R) protein is 5-methyltetrahydropteroyltriglutamate--homocysteine methyltransferase.